The primary structure comprises 295 residues: MEQFRNVGIIGRLGSTRVLETVRRLKRFLIDRHLHVILEDTIADVLPGHGLQTSSRKMLGEVCDLVIVVGGDGSMLGAARALARHKVPVLGINRGSLGFLTDIRPDELELKVAQVLEGQYLTENRFLLEAEVRRQGEAIGQGDALNDVVLHPGKSTRMIEFELYIDGQFVCSQKADGLIVATPTGSTAYALSAGGPIMHPKLDAIVVVPMYPHTLSSRPIVVDGNSELKVVVSPDMTIYPQVSCDGQNHFTCAPGDTLHVAKKAQKLRLIHPLDHNYYEVCRTKLGWGSRLGGHD.

D72 (proton acceptor) is an active-site residue. Residues 72 to 73, 146 to 147, R157, K174, D176, 187 to 192, and Q247 contribute to the NAD(+) site; these read DG, ND, and TAYALS.

The protein belongs to the NAD kinase family. Requires a divalent metal cation as cofactor.

The protein resides in the cytoplasm. It catalyses the reaction NAD(+) + ATP = ADP + NADP(+) + H(+). Functionally, involved in the regulation of the intracellular balance of NAD and NADP, and is a key enzyme in the biosynthesis of NADP. Catalyzes specifically the phosphorylation on 2'-hydroxyl of the adenosine moiety of NAD to yield NADP. The sequence is that of NAD kinase from Ectopseudomonas mendocina (strain ymp) (Pseudomonas mendocina).